Consider the following 132-residue polypeptide: Fatty acid-binding protein 1 (132 aa).

An N-acetylalanine modification is found at Ala2.

The protein belongs to the calycin superfamily. Fatty-acid binding protein (FABP) family.

The sequence is that of Fatty acid-binding protein 1 (FABP-1) from Fasciola gigantica (Giant liver fluke).